The following is a 341-amino-acid chain: NADH-quinone oxidoreductase subunit H 1 (341 aa).

A run of 8 helical transmembrane segments spans residues 13–33 (LVVIGQSVLLLVILLIAIAYI), 82–102 (GLFLLAPLVTCVLALAAWAVI), 115–135 (VGVLYILAVSSLSVYGIIMAG), 161–181 (IGFVVICVLLCVGSLNLTAIV), 190–210 (MLGWYWLPLFPMFVVFYVSAL), 248–268 (YVAIVTMCAMGTILFLGGWLP), 277–297 (WVPGIVWFSLKLLFMFFLFAM), and 313–333 (LGWKVFLPLSLAMVVIVASVL).

Belongs to the complex I subunit 1 family. In terms of assembly, NDH-1 is composed of 14 different subunits. Subunits NuoA, H, J, K, L, M, N constitute the membrane sector of the complex.

Its subcellular location is the cell inner membrane. It catalyses the reaction a quinone + NADH + 5 H(+)(in) = a quinol + NAD(+) + 4 H(+)(out). Its function is as follows. NDH-1 shuttles electrons from NADH, via FMN and iron-sulfur (Fe-S) centers, to quinones in the respiratory chain. The immediate electron acceptor for the enzyme in this species is believed to be ubiquinone. Couples the redox reaction to proton translocation (for every two electrons transferred, four hydrogen ions are translocated across the cytoplasmic membrane), and thus conserves the redox energy in a proton gradient. This subunit may bind ubiquinone. The chain is NADH-quinone oxidoreductase subunit H 1 from Rhodopseudomonas palustris (strain ATCC BAA-98 / CGA009).